The chain runs to 382 residues: Alkane 1-monooxygenase 1 (382 aa).

The next 4 membrane-spanning stretches (helical) occupy residues 10–30 (MLAI…SMPF), 43–63 (FWAF…DMLF), 90–110 (LATV…FVAF), and 121–141 (WILS…HELI). Fe cation contacts are provided by H138 and H142. Residues 146 to 166 (ALEQAAGGILLAAVCYAGFKV) traverse the membrane as a helical segment. Residues H168, H172, and H173 each contribute to the Fe cation site. Residues 236–256 (LALLVGFGWAFGWLGMVFFLG) traverse the membrane as a helical segment. 3 residues coordinate Fe cation: H312, H315, and H316.

The protein belongs to the fatty acid desaturase type 1 family. AlkB subfamily. Fe(3+) serves as cofactor.

It is found in the cell inner membrane. The enzyme catalyses octane + 2 reduced [rubredoxin] + O2 + 2 H(+) = 2 oxidized [rubredoxin] + octan-1-ol + H2O. It participates in hydrocarbon metabolism; alkane degradation. In terms of biological role, catalyzes the hydroxylation of n-alkanes in the presence of a NADH-rubredoxin reductase and rubredoxin. It preferably hydroxylases C16-C24 hydrocarbons. This chain is Alkane 1-monooxygenase 1 (alkB1), found in Pseudomonas aeruginosa (strain ATCC 15692 / DSM 22644 / CIP 104116 / JCM 14847 / LMG 12228 / 1C / PRS 101 / PAO1).